The following is a 333-amino-acid chain: Glyceraldehyde-3-phosphate dehydrogenase (333 aa).

NAD(+) is bound by residues 11-12 (RI), aspartate 35, methionine 79, and serine 121. D-glyceraldehyde 3-phosphate contacts are provided by residues 150–152 (SCT), threonine 181, 210–211 (TG), and arginine 233. The active-site Nucleophile is cysteine 151. Asparagine 315 serves as a coordination point for NAD(+).

Belongs to the glyceraldehyde-3-phosphate dehydrogenase family. In terms of assembly, homotetramer.

The protein localises to the cytoplasm. The catalysed reaction is D-glyceraldehyde 3-phosphate + phosphate + NAD(+) = (2R)-3-phospho-glyceroyl phosphate + NADH + H(+). Its pathway is carbohydrate degradation; glycolysis; pyruvate from D-glyceraldehyde 3-phosphate: step 1/5. Functionally, catalyzes the oxidative phosphorylation of glyceraldehyde 3-phosphate (G3P) to 1,3-bisphosphoglycerate (BPG) using the cofactor NAD. The first reaction step involves the formation of a hemiacetal intermediate between G3P and a cysteine residue, and this hemiacetal intermediate is then oxidized to a thioester, with concomitant reduction of NAD to NADH. The reduced NADH is then exchanged with the second NAD, and the thioester is attacked by a nucleophilic inorganic phosphate to produce BPG. In Bacteroides fragilis (strain YCH46), this protein is Glyceraldehyde-3-phosphate dehydrogenase (gap).